We begin with the raw amino-acid sequence, 95 residues long: Small ribosomal subunit protein bS6 (95 aa).

Belongs to the bacterial ribosomal protein bS6 family.

Functionally, binds together with bS18 to 16S ribosomal RNA. This Desulforamulus reducens (strain ATCC BAA-1160 / DSM 100696 / MI-1) (Desulfotomaculum reducens) protein is Small ribosomal subunit protein bS6.